Reading from the N-terminus, the 235-residue chain is Octanoyltransferase (235 aa).

Residues 37–220 (AGGPDTLLLL…AVNDALDGWL (184 aa)) enclose the BPL/LPL catalytic domain. Residues 78 to 85 (RGGKITWH), 150 to 152 (AIG), and 163 to 165 (GFA) contribute to the substrate site. The active-site Acyl-thioester intermediate is cysteine 181.

The protein belongs to the LipB family.

It localises to the cytoplasm. It carries out the reaction octanoyl-[ACP] + L-lysyl-[protein] = N(6)-octanoyl-L-lysyl-[protein] + holo-[ACP] + H(+). The protein operates within protein modification; protein lipoylation via endogenous pathway; protein N(6)-(lipoyl)lysine from octanoyl-[acyl-carrier-protein]: step 1/2. Its function is as follows. Catalyzes the transfer of endogenously produced octanoic acid from octanoyl-acyl-carrier-protein onto the lipoyl domains of lipoate-dependent enzymes. Lipoyl-ACP can also act as a substrate although octanoyl-ACP is likely to be the physiological substrate. The chain is Octanoyltransferase from Mycobacterium leprae (strain Br4923).